The primary structure comprises 525 residues: MAESPPTEVPEPPARPVLVVDFGAQYAQLIARRVREARVFSEVIPHTATIEEIKARQPRALVLSGGPSSVYEPGAPQLDPAVFDLGVPVFGICYGFQAMAQALGGTVAHTGTSEYGRTELKVLGGELHSGLPGVQPVWMSHGDAVTAAPDGFEVVASSPGAVVAAFENRARRLAGVQYHPEVMHTPHGQQVLSRFLHDFAGLGADWTAANIAGVLVEQVRAQIGDGHAICGLSGGVDSAVAAALVQRAIGDRLTCVFVDHGLLRAGERAQVQRDFVAATGANLVTVDAADTFLQALAGVTNPEGKRKIIGRQFIRAFEGAVRDVLGDKPVEFLVQGTLYPDVVESGGGSGTANIKSHHNVGGLPGDLKFTLVEPLRLLFKDEVRAVGRELGLPEEIVARQPFPGPGLGIRIVGEVTATRLDTLRRADSIAREELTAAGLDSLIWQCPVVLLGEVRSVGVQGDNRTYGHPIVLRPVTSEDAMTADWTRVPYEVLERISTRITNEVPEVNRVVLDITSKPPGTIEWE.

One can recognise a Glutamine amidotransferase type-1 domain in the interval 16-205 (PVLVVDFGAQ…LHDFAGLGAD (190 aa)). The Nucleophile role is filled by C93. Catalysis depends on residues H179 and E181. The GMPS ATP-PPase domain maps to 206 to 399 (WTAANIAGVL…LGLPEEIVAR (194 aa)). Position 233-239 (233-239 (SGGVDSA)) interacts with ATP.

Homodimer.

The catalysed reaction is XMP + L-glutamine + ATP + H2O = GMP + L-glutamate + AMP + diphosphate + 2 H(+). Its pathway is purine metabolism; GMP biosynthesis; GMP from XMP (L-Gln route): step 1/1. Its function is as follows. Catalyzes the synthesis of GMP from XMP. The chain is GMP synthase [glutamine-hydrolyzing] from Mycolicibacterium paratuberculosis (strain ATCC BAA-968 / K-10) (Mycobacterium paratuberculosis).